The chain runs to 227 residues: Flagellar L-ring protein (227 aa).

The signal sequence occupies residues 1–15; that stretch reads MRTWAVLPILLMLVG. C16 is lipidated: N-palmitoyl cysteine. Residue C16 is the site of S-diacylglycerol cysteine attachment.

It belongs to the FlgH family. The basal body constitutes a major portion of the flagellar organelle and consists of four rings (L,P,S, and M) mounted on a central rod.

It is found in the cell outer membrane. It localises to the bacterial flagellum basal body. Its function is as follows. Assembles around the rod to form the L-ring and probably protects the motor/basal body from shearing forces during rotation. The sequence is that of Flagellar L-ring protein from Syntrophotalea carbinolica (strain DSM 2380 / NBRC 103641 / GraBd1) (Pelobacter carbinolicus).